A 325-amino-acid polypeptide reads, in one-letter code: tRNA(Ile)-lysidine synthase (325 aa).

35 to 40 provides a ligand contact to ATP; that stretch reads SGGQDS.

The protein belongs to the tRNA(Ile)-lysidine synthase family.

The protein resides in the cytoplasm. The catalysed reaction is cytidine(34) in tRNA(Ile2) + L-lysine + ATP = lysidine(34) in tRNA(Ile2) + AMP + diphosphate + H(+). Functionally, ligates lysine onto the cytidine present at position 34 of the AUA codon-specific tRNA(Ile) that contains the anticodon CAU, in an ATP-dependent manner. Cytidine is converted to lysidine, thus changing the amino acid specificity of the tRNA from methionine to isoleucine. The polypeptide is tRNA(Ile)-lysidine synthase (Gloeobacter violaceus (strain ATCC 29082 / PCC 7421)).